Here is a 143-residue protein sequence, read N- to C-terminus: Nucleoside diphosphate kinase (143 aa).

Lys-11, Phe-59, Arg-87, Thr-93, Arg-104, and Asn-114 together coordinate ATP. His-117 functions as the Pros-phosphohistidine intermediate in the catalytic mechanism.

Belongs to the NDK family. In terms of assembly, homotetramer. Mg(2+) serves as cofactor.

The protein localises to the cytoplasm. The enzyme catalyses a 2'-deoxyribonucleoside 5'-diphosphate + ATP = a 2'-deoxyribonucleoside 5'-triphosphate + ADP. The catalysed reaction is a ribonucleoside 5'-diphosphate + ATP = a ribonucleoside 5'-triphosphate + ADP. In terms of biological role, major role in the synthesis of nucleoside triphosphates other than ATP. The ATP gamma phosphate is transferred to the NDP beta phosphate via a ping-pong mechanism, using a phosphorylated active-site intermediate. In Sodalis glossinidius (strain morsitans), this protein is Nucleoside diphosphate kinase.